Here is a 231-residue protein sequence, read N- to C-terminus: Adenosine 5'-phosphosulfate reductase (231 aa).

Cys-118, Cys-119, Cys-201, and Cys-204 together coordinate [4Fe-4S] cluster. The Nucleophile; cysteine thiosulfonate intermediate role is filled by Cys-227.

This sequence belongs to the PAPS reductase family. CysH subfamily. The cofactor is [4Fe-4S] cluster.

It is found in the cytoplasm. It catalyses the reaction [thioredoxin]-disulfide + sulfite + AMP + 2 H(+) = adenosine 5'-phosphosulfate + [thioredoxin]-dithiol. It participates in sulfur metabolism; hydrogen sulfide biosynthesis; sulfite from sulfate. In terms of biological role, catalyzes the formation of sulfite from adenosine 5'-phosphosulfate (APS) using thioredoxin as an electron donor. The chain is Adenosine 5'-phosphosulfate reductase from Halalkalibacterium halodurans (strain ATCC BAA-125 / DSM 18197 / FERM 7344 / JCM 9153 / C-125) (Bacillus halodurans).